The sequence spans 221 residues: DELTA-actitoxin-Ucs1a (221 aa).

A signal peptide spans 1–19; the sequence is MNRLIVLCLFVAMIYATIA. The propeptide occupies 20–42; it reads LPKKEDISNDERSISVSKVPVKK. The plays an important role in the hemolytic activity stretch occupies residues 45–54; it reads AIAGAVIEGA. Positions 53 to 72 are N-terminal region; it reads GAKLTFGILEKILTVLGDIN. Phosphocholine is bound by residues serine 96, valine 129, serine 147, proline 149, tyrosine 175, tyrosine 179, and tyrosine 180. A trp-rich region, which is important for the binding to lipid membrane region spans residues 147–162; sequence SVPYDYNLYSNWWNIK. The short motif at 186–188 is the Cell attachment site, crucial for protein stability element; that stretch reads KGD.

Belongs to the actinoporin family. Sea anemone subfamily. In terms of assembly, octamer or nonamer in membranes. Monomer in the soluble state.

It is found in the secreted. The protein resides in the nematocyst. It localises to the target cell membrane. Its function is as follows. Pore-forming protein that forms cations-selective hydrophilic pores of around 1 nm and causes cytolysis. Pore formation is a multi-step process that involves specific recognition of membrane sphingomyelin (but neither cholesterol nor phosphatidylcholine) using aromatic rich region and adjacent phosphocholine (POC) binding site, firm binding to the membrane (mainly driven by hydrophobic interactions) accompanied by the transfer of the N-terminal region to the lipid-water interface and finally pore formation after oligomerization of monomers. The chain is DELTA-actitoxin-Ucs1a from Urticina crassicornis (Mottled anemone).